The sequence spans 206 residues: 3-demethoxyubiquinol 3-hydroxylase (206 aa).

Glu-55, Glu-85, His-88, Glu-137, Glu-169, and His-172 together coordinate Fe cation.

It belongs to the COQ7 family. Fe cation is required as a cofactor.

The protein resides in the cell membrane. The enzyme catalyses a 5-methoxy-2-methyl-3-(all-trans-polyprenyl)benzene-1,4-diol + AH2 + O2 = a 3-demethylubiquinol + A + H2O. It functions in the pathway cofactor biosynthesis; ubiquinone biosynthesis. Its function is as follows. Catalyzes the hydroxylation of 2-nonaprenyl-3-methyl-6-methoxy-1,4-benzoquinol during ubiquinone biosynthesis. This is 3-demethoxyubiquinol 3-hydroxylase from Azoarcus sp. (strain BH72).